A 198-amino-acid chain; its full sequence is MTNIPEIPYKAVVNIENIVATVTLDQNLDLYAMERSVPNVEYDPDQFPGLIFRLEAPKVTSLIFKSGKMVVTGAKSTDELIKAVKRIIKTLKRYGMNLTGKPKIQIQNIVASANLHVIVNLDKAAFLLENNMYEPEQFPGLIYRMEDPRVVLLIFSSGKMVITGAKREEEVHKAVKKIFDKLVELDCVKPFEEEELEF.

2 repeat units span residues 15-91 (IENI…IKTL) and 106-182 (IQNI…FDKL).

The protein belongs to the TBP family.

General factor that plays a role in the activation of archaeal genes transcribed by RNA polymerase. Binds specifically to the TATA box promoter element which lies close to the position of transcription initiation. This Sulfurisphaera tokodaii (strain DSM 16993 / JCM 10545 / NBRC 100140 / 7) (Sulfolobus tokodaii) protein is TATA-box-binding protein (tbp).